The sequence spans 427 residues: Glutamate-1-semialdehyde 2,1-aminomutase (427 aa).

Lysine 265 is modified (N6-(pyridoxal phosphate)lysine).

Belongs to the class-III pyridoxal-phosphate-dependent aminotransferase family. HemL subfamily. As to quaternary structure, homodimer. Pyridoxal 5'-phosphate is required as a cofactor.

Its subcellular location is the cytoplasm. It carries out the reaction (S)-4-amino-5-oxopentanoate = 5-aminolevulinate. Its pathway is porphyrin-containing compound metabolism; protoporphyrin-IX biosynthesis; 5-aminolevulinate from L-glutamyl-tRNA(Glu): step 2/2. This chain is Glutamate-1-semialdehyde 2,1-aminomutase, found in Pseudomonas entomophila (strain L48).